Reading from the N-terminus, the 267-residue chain is Phosphate import ATP-binding protein PstB 2 (267 aa).

The ABC transporter domain maps to 21-262; it reads LSTKDVHVYY…AKLQSTNDYV (242 aa). 53 to 60 contacts ATP; that stretch reads GPSGSGKS.

Belongs to the ABC transporter superfamily. Phosphate importer (TC 3.A.1.7) family. As to quaternary structure, the complex is composed of two ATP-binding proteins (PstB), two transmembrane proteins (PstC and PstA) and a solute-binding protein (PstS).

It is found in the cell membrane. The catalysed reaction is phosphate(out) + ATP + H2O = ADP + 2 phosphate(in) + H(+). Its function is as follows. Part of the ABC transporter complex PstSACB involved in phosphate import. Responsible for energy coupling to the transport system. The sequence is that of Phosphate import ATP-binding protein PstB 2 from Streptococcus pneumoniae (strain ATCC BAA-255 / R6).